Here is a 511-residue protein sequence, read N- to C-terminus: GMP synthase [glutamine-hydrolyzing] (511 aa).

The 191-residue stretch at 5–195 folds into the Glutamine amidotransferase type-1 domain; it reads DILVLDFGSQ…AKYACNCESV (191 aa). Residue Cys82 is the Nucleophile of the active site. Catalysis depends on residues His169 and Glu171. Residues 196 to 386 enclose the GMPS ATP-PPase domain; that stretch reads WNMGSFAKTQ…LGLSKEVVYR (191 aa). 223-229 serves as a coordination point for ATP; that stretch reads SGGVDSS.

In terms of assembly, homodimer.

The catalysed reaction is XMP + L-glutamine + ATP + H2O = GMP + L-glutamate + AMP + diphosphate + 2 H(+). It participates in purine metabolism; GMP biosynthesis; GMP from XMP (L-Gln route): step 1/1. Catalyzes the synthesis of GMP from XMP. The sequence is that of GMP synthase [glutamine-hydrolyzing] from Campylobacter jejuni (strain RM1221).